Consider the following 141-residue polypeptide: Large ribosomal subunit protein uL11 (141 aa).

The protein belongs to the universal ribosomal protein uL11 family. Part of the ribosomal stalk of the 50S ribosomal subunit. Interacts with L10 and the large rRNA to form the base of the stalk. L10 forms an elongated spine to which L12 dimers bind in a sequential fashion forming a multimeric L10(L12)X complex. In terms of processing, one or more lysine residues are methylated.

Functionally, forms part of the ribosomal stalk which helps the ribosome interact with GTP-bound translation factors. In Methylacidiphilum infernorum (isolate V4) (Methylokorus infernorum (strain V4)), this protein is Large ribosomal subunit protein uL11.